Reading from the N-terminus, the 227-residue chain is Ribose-5-phosphate isomerase A (227 aa).

Substrate is bound by residues 26–29, 82–85, and 95–98; these read TGST, DGAD, and KGGG. Residue glutamate 104 is the Proton acceptor of the active site. Lysine 122 is a binding site for substrate.

Belongs to the ribose 5-phosphate isomerase family. In terms of assembly, homodimer.

The catalysed reaction is aldehydo-D-ribose 5-phosphate = D-ribulose 5-phosphate. Its pathway is carbohydrate degradation; pentose phosphate pathway; D-ribose 5-phosphate from D-ribulose 5-phosphate (non-oxidative stage): step 1/1. Functionally, catalyzes the reversible conversion of ribose-5-phosphate to ribulose 5-phosphate. In Streptococcus pyogenes serotype M1, this protein is Ribose-5-phosphate isomerase A.